Consider the following 258-residue polypeptide: MSFIKPIYQDINSILIGQKVKRPKSGTLSGHAAGEPFEKLVYKFLKENLSDLTFKQYEYLNDLFMKNPAIIGHEARYKLFNSPTLLFLLSRGKAATENWSIENLFEEKQNDTADILLVKDQFYELLDVKRRNISKSAQAPNIISAYKLAQTCAKMIDNKEFDLFDINYLEVDSELNGEDLVCVSTSFAELFKSEPSELYINWAAAMQIQFHVRDLDQGFNGTREEWAKSYLKHFVTQAEQRAISMIDKFVKPFKKYIL.

The enzyme catalyses Endonucleolytic cleavage of DNA to give specific double-stranded fragments with terminal 5'-phosphates.. In terms of biological role, a P subtype restriction enzyme that recognizes the double-stranded sequence 5'-GTYRAC-3' and cleaves after Y-3. This is Type II restriction enzyme HincII (hincIIR) from Haemophilus influenzae.